Consider the following 357-residue polypeptide: Holliday junction branch migration complex subunit RuvB (357 aa).

Over residues 1–15 (MAIQSDSLSSLPDSP) the composition is skewed to low complexity. A disordered region spans residues 1 to 30 (MAIQSDSLSSLPDSPRIVAPQPVSPNEESI). The segment at 13–195 (DSPRIVAPQP…FGIVSRLEFY (183 aa)) is large ATPase domain (RuvB-L). ATP-binding positions include L34, R35, G76, K79, T80, T81, 142–144 (EDF), R185, Y195, and R232. T80 contributes to the Mg(2+) binding site. The small ATPAse domain (RuvB-S) stretch occupies residues 196–266 (NTDELARIVT…AAGRALAMLD (71 aa)). Positions 269-357 (PQGLDVMDRK…SGGTGELFSK (89 aa)) are head domain (RuvB-H). Residues R305, R324, and R329 each coordinate DNA.

The protein belongs to the RuvB family. In terms of assembly, homohexamer. Forms an RuvA(8)-RuvB(12)-Holliday junction (HJ) complex. HJ DNA is sandwiched between 2 RuvA tetramers; dsDNA enters through RuvA and exits via RuvB. An RuvB hexamer assembles on each DNA strand where it exits the tetramer. Each RuvB hexamer is contacted by two RuvA subunits (via domain III) on 2 adjacent RuvB subunits; this complex drives branch migration. In the full resolvosome a probable DNA-RuvA(4)-RuvB(12)-RuvC(2) complex forms which resolves the HJ.

Its subcellular location is the cytoplasm. It catalyses the reaction ATP + H2O = ADP + phosphate + H(+). The RuvA-RuvB-RuvC complex processes Holliday junction (HJ) DNA during genetic recombination and DNA repair, while the RuvA-RuvB complex plays an important role in the rescue of blocked DNA replication forks via replication fork reversal (RFR). RuvA specifically binds to HJ cruciform DNA, conferring on it an open structure. The RuvB hexamer acts as an ATP-dependent pump, pulling dsDNA into and through the RuvAB complex. RuvB forms 2 homohexamers on either side of HJ DNA bound by 1 or 2 RuvA tetramers; 4 subunits per hexamer contact DNA at a time. Coordinated motions by a converter formed by DNA-disengaged RuvB subunits stimulates ATP hydrolysis and nucleotide exchange. Immobilization of the converter enables RuvB to convert the ATP-contained energy into a lever motion, pulling 2 nucleotides of DNA out of the RuvA tetramer per ATP hydrolyzed, thus driving DNA branch migration. The RuvB motors rotate together with the DNA substrate, which together with the progressing nucleotide cycle form the mechanistic basis for DNA recombination by continuous HJ branch migration. Branch migration allows RuvC to scan DNA until it finds its consensus sequence, where it cleaves and resolves cruciform DNA. This Bordetella parapertussis (strain 12822 / ATCC BAA-587 / NCTC 13253) protein is Holliday junction branch migration complex subunit RuvB.